We begin with the raw amino-acid sequence, 428 residues long: Peptidase B (428 aa).

2 residues coordinate Mn(2+): lysine 195 and aspartate 200. Lysine 207 is an active-site residue. Positions 218, 277, and 279 each coordinate Mn(2+). Arginine 281 is an active-site residue.

This sequence belongs to the peptidase M17 family. Homohexamer. Mn(2+) is required as a cofactor.

The protein localises to the cytoplasm. The catalysed reaction is Release of an N-terminal amino acid, Xaa, from a peptide or arylamide. Xaa is preferably Glu or Asp but may be other amino acids, including Leu, Met, His, Cys and Gln.. In terms of biological role, probably plays an important role in intracellular peptide degradation. This Enterobacter sp. (strain 638) protein is Peptidase B.